A 158-amino-acid chain; its full sequence is Small ribosomal subunit protein uS7 (158 aa).

Belongs to the universal ribosomal protein uS7 family. As to quaternary structure, part of the 30S ribosomal subunit. Contacts proteins S9 and S11.

Its function is as follows. One of the primary rRNA binding proteins, it binds directly to 16S rRNA where it nucleates assembly of the head domain of the 30S subunit. Is located at the subunit interface close to the decoding center, probably blocks exit of the E-site tRNA. This Gluconobacter oxydans (strain 621H) (Gluconobacter suboxydans) protein is Small ribosomal subunit protein uS7.